The sequence spans 981 residues: MLRRPAPALAPAARLLLAGLLCGGGVWAARVNKHKPWLEPTYHGIVTENDNTVLLDPPLIALDKDAPLRFAESFEVTVTKEGEICGFKIHGQNVPFDAVVVDKSTGEGVIRSKEKLDCELQKDYSFTIQAYDCGKGPDGTNVKKSHKATVHIQVNDVNEYAPVFKEKSYKATVIEGKQYDSILRVEAVDADCSPQFSQICSYEIITPDVPFTVDKDGYIKNTEKLNYGKEHQYKLTVTAYDCGKKRATEDVLVKISIKPTCTPGWQGWNNRIEYEPGTGALAVFPNIHLETCDEPVASVQATVELETSHIGKGCDRDTYSEKSLHRLCGAAAGTAELLPSPSGSLNWTMGLPTDNGHDSDQVFEFNGTQAVRIPDGVVSVSPKEPFTISVWMRHGPFGRKKETILCSSDKTDMNRHHYSLYVHGCRLIFLFRQDPSEEKKYRPAEFHWKLNQVCDEEWHHYVLNVEFPSVTLYVDGTSHEPFSVTEDYPLHPSKIETQLVVGACWQEFSGVENDNETEPVTVASAGGDLHMTQFFRGNLAGLTLRSGKLADKKVIDCLYTCKEGLDLQVLEDSGRGVQIQAHPSQLVLTLEGEDLGELDKAMQHISYLNSRQFPTPGIRRLKITSTIKCFNEATCISVPPVDGYVMVLQPEEPKISLSGVHHFARAASEFESSEGVFLFPELRIISTITREVEPEGDGAEDPTVQESLVSEEIVHDLDTCEVTVEGEELNHEQESLEVDMARLQQKGIEVSSSELGMTFTGVDTMASYEEVLHLLRYRNWHARSLLDRKFKLICSELNGRYISNEFKVEVNVIHTANPMEHANHMAAQPQFVHPEHRSFVDLSGHNLANPHPFAVVPSTATVVIVVCVSFLVFMIILGVFRIRAAHRRTMRDQDTGKENEMDWDDSALTITVNPMETYEDQHSSEEEEEEEEEEESEDGEEEDDITSAESESSEEEEGEQGDPQNATRQQQLEWDDSTLSY.

An N-terminal signal peptide occupies residues 1-28 (MLRRPAPALAPAARLLLAGLLCGGGVWA). Over 29-859 (ARVNKHKPWL…PHPFAVVPST (831 aa)) the chain is Extracellular. 2 Cadherin domains span residues 38–164 (LEPT…APVF) and 165–265 (KEKS…TPGW). N-linked (GlcNAc...) asparagine glycosylation is found at asparagine 346, asparagine 366, and asparagine 515. A helical transmembrane segment spans residues 860–880 (ATVVIVVCVSFLVFMIILGVF). At 881 to 981 (RIRAAHRRTM…LEWDDSTLSY (101 aa)) the chain is on the cytoplasmic side. Residues 915-981 (METYEDQHSS…LEWDDSTLSY (67 aa)) are disordered. Over residues 925-960 (EEEEEEEEEEESEDGEEEDDITSAESESSEEEEGEQ) the composition is skewed to acidic residues. The segment covering 962-981 (DPQNATRQQQLEWDDSTLSY) has biased composition (polar residues).

Belongs to the calsyntenin family. In terms of assembly, directly interacts with APBA2. Forms a tripartite complex with APBA2 and APP. Interacts with KLC1. As to quaternary structure, interacts with APBB1; this interaction stabilizes AlcICD metabolism. Interacts with PSEN1. Proteolytically processed under normal cellular conditions. A primary zeta-cleavage generates a large extracellular (soluble) N-terminal domain (sAlc) and a short C-terminal transmembrane fragment (CTF1). A secondary cleavage catalyzed by presenilin gamma-secretase within the transmembrane domain releases the beta-Alc-alpha chain in the extracellular milieu and produces an intracellular fragment (AlcICD). This processing is strongly suppressed in the tripartite complex formed with APBA2 and APP, which seems to prevent the association with PSEN1. In terms of tissue distribution, expressed in the brain and, a lower level, in the heart, skeletal muscle, kidney and placenta. Accumulates in dystrophic neurites around the amyloid core of Alzheimer disease senile plaques (at protein level).

Its subcellular location is the postsynaptic cell membrane. It is found in the endoplasmic reticulum membrane. It localises to the golgi apparatus membrane. The protein resides in the cell projection. The protein localises to the neuron projection. Its subcellular location is the nucleus. Its function is as follows. Postsynaptic adhesion molecule that binds to presynaptic neurexins to mediate both excitatory and inhibitory synapse formation. Promotes synapse development by acting as a cell adhesion molecule at the postsynaptic membrane, which associates with neurexin-alpha at the presynaptic membrane. Also functions as a cargo in axonal anterograde transport by acting as a molecular adapter that promotes KLC1 association with vesicles. Complex formation with APBA2 and APP, stabilizes APP metabolism and enhances APBA2-mediated suppression of beta-APP40 secretion, due to the retardation of intracellular APP maturation. In terms of biological role, as intracellular fragment AlcICD, suppresses APBB1-dependent transactivation stimulated by APP C-terminal intracellular fragment (AICD), most probably by competing with AICD for APBB1-binding. In complex with APBA2 and C99, a C-terminal APP fragment, abolishes C99 interaction with PSEN1 and thus APP C99 cleavage by gamma-secretase, most probably through stabilization of the direct interaction between APBA2 and APP. This is Calsyntenin-1 from Homo sapiens (Human).